A 445-amino-acid polypeptide reads, in one-letter code: Methionine aminopeptidase 2-3 (445 aa).

The tract at residues 14-115 (ISDADANGAD…ENRYRTTSEE (102 aa)) is disordered. Residues 38-47 (EDDDSDDDVA) are compositionally biased toward acidic residues. Residues 60–75 (AKKKKNKKRKPKKKQP) show a composition bias toward basic residues. Residues 85-95 (PLSQLFPNNTY) show a composition bias toward polar residues. Positions 97–115 (KGEEVEYKDENRYRTTSEE) are enriched in basic and acidic residues. Position 198 (His-198) interacts with substrate. A divalent metal cation-binding residues include Asp-218, Asp-229, and His-298. A substrate-binding site is contributed by His-306. 2 residues coordinate a divalent metal cation: Glu-331 and Glu-426.

This sequence belongs to the peptidase M24A family. Methionine aminopeptidase eukaryotic type 2 subfamily. Co(2+) serves as cofactor. It depends on Zn(2+) as a cofactor. The cofactor is Mn(2+). Fe(2+) is required as a cofactor.

It is found in the cytoplasm. It carries out the reaction Release of N-terminal amino acids, preferentially methionine, from peptides and arylamides.. Cotranslationally removes the N-terminal methionine from nascent proteins. The N-terminal methionine is often cleaved when the second residue in the primary sequence is small and uncharged (Met-Ala-, Cys, Gly, Pro, Ser, Thr, or Val). This is Methionine aminopeptidase 2-3 from Neosartorya fischeri (strain ATCC 1020 / DSM 3700 / CBS 544.65 / FGSC A1164 / JCM 1740 / NRRL 181 / WB 181) (Aspergillus fischerianus).